The primary structure comprises 103 residues: MAAVSLSVSTVKPLGDRVFVKVSESEEKTAGGILLPDTAKEKPQVGEVVQVGPGKPNEDGSRQAPEVGIGDKVLYSKYAGTDIKLGSDEYVLLSEKDILAIVN.

The protein belongs to the GroES chaperonin family. In terms of assembly, heptamer of 7 subunits arranged in a ring. Interacts with the chaperonin GroEL.

The protein localises to the cytoplasm. In terms of biological role, together with the chaperonin GroEL, plays an essential role in assisting protein folding. The GroEL-GroES system forms a nano-cage that allows encapsulation of the non-native substrate proteins and provides a physical environment optimized to promote and accelerate protein folding. GroES binds to the apical surface of the GroEL ring, thereby capping the opening of the GroEL channel. This Synechococcus sp. (strain CC9902) protein is Co-chaperonin GroES.